We begin with the raw amino-acid sequence, 327 residues long: Putative HTH-type transcriptional regulatory protein MM_0444 (327 aa).

The HTH cro/C1-type domain occupies 132–190 (LKKARTTQSMSLGTLASMVGVSRRTISKYEEEGMDASIDVVLHLEDIFGVELAKPIDIL). The H-T-H motif DNA-binding region spans 143–162 (LGTLASMVGVSRRTISKYEE). Residues 195–214 (SRKPRKKAEPEKEEPKGKPG) form a disordered region. Over residues 201–211 (KAEPEKEEPKG) the composition is skewed to basic and acidic residues.

The sequence is that of Putative HTH-type transcriptional regulatory protein MM_0444 from Methanosarcina mazei (strain ATCC BAA-159 / DSM 3647 / Goe1 / Go1 / JCM 11833 / OCM 88) (Methanosarcina frisia).